Here is a 209-residue protein sequence, read N- to C-terminus: Ribosomal RNA small subunit methyltransferase G (209 aa).

S-adenosyl-L-methionine contacts are provided by residues glycine 71, phenylalanine 76, 122-123 (AE), and arginine 135.

It belongs to the methyltransferase superfamily. RNA methyltransferase RsmG family.

It is found in the cytoplasm. Functionally, specifically methylates the N7 position of a guanine in 16S rRNA. The polypeptide is Ribosomal RNA small subunit methyltransferase G (Flavobacterium psychrophilum (strain ATCC 49511 / DSM 21280 / CIP 103535 / JIP02/86)).